The primary structure comprises 523 residues: 2-isopropylmalate synthase (523 aa).

One can recognise a Pyruvate carboxyltransferase domain in the interval Val-12–Thr-274. Positions 21, 209, 211, and 245 each coordinate Mn(2+). The regulatory domain stretch occupies residues Lys-398–Ser-523.

This sequence belongs to the alpha-IPM synthase/homocitrate synthase family. LeuA type 1 subfamily. In terms of assembly, homodimer. Requires Mn(2+) as cofactor.

Its subcellular location is the cytoplasm. The catalysed reaction is 3-methyl-2-oxobutanoate + acetyl-CoA + H2O = (2S)-2-isopropylmalate + CoA + H(+). It functions in the pathway amino-acid biosynthesis; L-leucine biosynthesis; L-leucine from 3-methyl-2-oxobutanoate: step 1/4. Its function is as follows. Catalyzes the condensation of the acetyl group of acetyl-CoA with 3-methyl-2-oxobutanoate (2-ketoisovalerate) to form 3-carboxy-3-hydroxy-4-methylpentanoate (2-isopropylmalate). In Bradyrhizobium sp. (strain BTAi1 / ATCC BAA-1182), this protein is 2-isopropylmalate synthase.